Here is a 468-residue protein sequence, read N- to C-terminus: 3-isopropylmalate dehydratase large subunit (468 aa).

[4Fe-4S] cluster is bound by residues Cys-349, Cys-409, and Cys-412.

The protein belongs to the aconitase/IPM isomerase family. LeuC type 1 subfamily. Heterodimer of LeuC and LeuD. [4Fe-4S] cluster serves as cofactor.

The enzyme catalyses (2R,3S)-3-isopropylmalate = (2S)-2-isopropylmalate. It participates in amino-acid biosynthesis; L-leucine biosynthesis; L-leucine from 3-methyl-2-oxobutanoate: step 2/4. In terms of biological role, catalyzes the isomerization between 2-isopropylmalate and 3-isopropylmalate, via the formation of 2-isopropylmaleate. In Ruegeria pomeroyi (strain ATCC 700808 / DSM 15171 / DSS-3) (Silicibacter pomeroyi), this protein is 3-isopropylmalate dehydratase large subunit.